The following is a 143-amino-acid chain: Probable FAD-linked sulfhydryl oxidase R368 (143 aa).

The ERV/ALR sulfhydryl oxidase domain maps to 10 to 104; sequence GWTFSHAVAL…YPEAIEAIEK (95 aa). Cys46 and Cys49 are disulfide-bonded. The chain crosses the membrane as a helical span at residues 117–137; it reads FFIILIIIGIIVIIYLMYIVF.

Requires FAD as cofactor.

It is found in the membrane. It carries out the reaction 2 R'C(R)SH + O2 = R'C(R)S-S(R)CR' + H2O2. FAD-dependent sulfhydryl oxidase that catalyzes disulfide bond formation. The sequence is that of Probable FAD-linked sulfhydryl oxidase R368 from Acanthamoeba polyphaga mimivirus (APMV).